Here is a 373-residue protein sequence, read N- to C-terminus: Anhydro-N-acetylmuramic acid kinase (373 aa).

12-19 (GTSLDGVD) is an ATP binding site.

This sequence belongs to the anhydro-N-acetylmuramic acid kinase family.

It carries out the reaction 1,6-anhydro-N-acetyl-beta-muramate + ATP + H2O = N-acetyl-D-muramate 6-phosphate + ADP + H(+). The protein operates within amino-sugar metabolism; 1,6-anhydro-N-acetylmuramate degradation. Its pathway is cell wall biogenesis; peptidoglycan recycling. Catalyzes the specific phosphorylation of 1,6-anhydro-N-acetylmuramic acid (anhMurNAc) with the simultaneous cleavage of the 1,6-anhydro ring, generating MurNAc-6-P. Is required for the utilization of anhMurNAc either imported from the medium or derived from its own cell wall murein, and thus plays a role in cell wall recycling. This Serratia proteamaculans (strain 568) protein is Anhydro-N-acetylmuramic acid kinase.